Reading from the N-terminus, the 610-residue chain is Aspartate--tRNA(Asp/Asn) ligase (610 aa).

Position 177 (E177) interacts with L-aspartate. The segment at 201-204 is aspartate; sequence QLFK. R223 is a binding site for L-aspartate. ATP is bound by residues 223–225 and Q232; that span reads RDE. Residue H461 participates in L-aspartate binding. ATP is bound at residue E499. An L-aspartate-binding site is contributed by R506. 551–554 lines the ATP pocket; sequence GVDR.

The protein belongs to the class-II aminoacyl-tRNA synthetase family. Type 1 subfamily. As to quaternary structure, homodimer.

It localises to the cytoplasm. It catalyses the reaction tRNA(Asx) + L-aspartate + ATP = L-aspartyl-tRNA(Asx) + AMP + diphosphate. In terms of biological role, aspartyl-tRNA synthetase with relaxed tRNA specificity since it is able to aspartylate not only its cognate tRNA(Asp) but also tRNA(Asn). Reaction proceeds in two steps: L-aspartate is first activated by ATP to form Asp-AMP and then transferred to the acceptor end of tRNA(Asp/Asn). The polypeptide is Aspartate--tRNA(Asp/Asn) ligase (Parasynechococcus marenigrum (strain WH8102)).